Reading from the N-terminus, the 256-residue chain is ATP-dependent dethiobiotin synthetase BioD (256 aa).

13 to 18 lines the ATP pocket; that stretch reads EVGKTY. Residue Thr17 participates in Mg(2+) binding. Residue Lys38 is part of the active site. Residue Ser42 coordinates substrate. Residues Asp56, 118–121, and 187–188 each bind ATP; these read EGAG and NR. Mg(2+) contacts are provided by Asp56 and Glu118.

It belongs to the dethiobiotin synthetase family. In terms of assembly, homodimer. The cofactor is Mg(2+).

Its subcellular location is the cytoplasm. It carries out the reaction (7R,8S)-7,8-diammoniononanoate + CO2 + ATP = (4R,5S)-dethiobiotin + ADP + phosphate + 3 H(+). Its pathway is cofactor biosynthesis; biotin biosynthesis; biotin from 7,8-diaminononanoate: step 1/2. Catalyzes a mechanistically unusual reaction, the ATP-dependent insertion of CO2 between the N7 and N8 nitrogen atoms of 7,8-diaminopelargonic acid (DAPA, also called 7,8-diammoniononanoate) to form a ureido ring. In Rhodopirellula baltica (strain DSM 10527 / NCIMB 13988 / SH1), this protein is ATP-dependent dethiobiotin synthetase BioD.